We begin with the raw amino-acid sequence, 353 residues long: GTPase Obg (353 aa).

The Obg domain occupies 1–159 (MKFVDEVRIH…RDLVLELKLL (159 aa)). The OBG-type G domain maps to 160–333 (ADVGIVGYPN…LMDAVGRALY (174 aa)). GTP is bound by residues 166–173 (GYPNAGKS), 191–195 (FTTLV), 212–215 (DIPG), 283–286 (TKID), and 314–316 (SAV). Ser173 and Thr193 together coordinate Mg(2+).

The protein belongs to the TRAFAC class OBG-HflX-like GTPase superfamily. OBG GTPase family. In terms of assembly, monomer. The cofactor is Mg(2+).

The protein resides in the cytoplasm. An essential GTPase which binds GTP, GDP and possibly (p)ppGpp with moderate affinity, with high nucleotide exchange rates and a fairly low GTP hydrolysis rate. Plays a role in control of the cell cycle, stress response, ribosome biogenesis and in those bacteria that undergo differentiation, in morphogenesis control. The protein is GTPase Obg of Anaeromyxobacter sp. (strain Fw109-5).